Here is a 607-residue protein sequence, read N- to C-terminus: Glycerophosphodiester phosphodiesterase domain-containing protein 5 (607 aa).

At 1 to 42 (MVRHQPLQYYEPQLCLSCLTGIYGCRWKRYQRSHDDTTPWER) the chain is on the cytoplasmic side. Disulfide bonds link C15–C18 and C25–C571. Residues 43-63 (LWFLLLVCTFSLTLTWLYFWW) form a helical membrane-spanning segment. Residues 64 to 89 (GVHNDYDEFNWYLYNRMGYWSDWSVP) lie on the Extracellular side of the membrane. A helical membrane pass occupies residues 90-110 (ILVTSAAAFTYIAGLLVLALC). Topologically, residues 111–125 (HIAVGQQLNLHWIHK) are cytoplasmic. Residues 126–146 (MGLVVILASTVVAMSAVAQLW) traverse the membrane as a helical segment. Residues 147-160 (EDEWEVLLISLQGT) are Extracellular-facing. A helical membrane pass occupies residues 161–181 (APFLHIGALVAITALSWIVAG). Topologically, residues 182-192 (QFARAERSSSQ) are cytoplasmic. The chain crosses the membrane as a helical span at residues 193-213 (LTILCTFFAVVFTFYLIPLTI). The Extracellular segment spans residues 214–496 (SSPCIMEKKD…PLWIMPPDEY (283 aa)). The 258-residue stretch at 228–485 (PALIGHRGAP…DNSHTLSRVP (258 aa)) folds into the GP-PDE domain. N301, N336, N352, N374, and N448 each carry an N-linked (GlcNAc...) asparagine glycan. Residues 497 to 517 (CLMWVTADLISFSLIIGIFVL) traverse the membrane as a helical segment. Residues 518–607 (QKWRLGGIRS…AKTVTEQSGH (90 aa)) are Cytoplasmic-facing. The disordered stretch occupies residues 582-607 (ANSTATPVGPRNAGSRAKTVTEQSGH).

This sequence belongs to the glycerophosphoryl diester phosphodiesterase family. In terms of assembly, interacts with PRDX1; forms a mixed-disulfide with PRDX1, leading to disrupt intramolecular disulfide bond between Cys-25 and Cys-571. In terms of processing, intramolecular disulfide bond between Cys-25 and Cys-571 is reduced by PRDX1. As to expression, detected in brain, lung, heart, kidney and testis.

Its subcellular location is the endomembrane system. It localises to the cytoplasm. It is found in the perinuclear region. The protein localises to the cell projection. The protein resides in the growth cone. The enzyme catalyses a 1,2-diacyl-sn-glycero-3-phospho-(1D-myo-inositol-4,5-bisphosphate) + H2O = 1D-myo-inositol 1,4,5-trisphosphate + a 1,2-diacyl-sn-glycerol + H(+). It catalyses the reaction sn-glycerol 3-phosphocholine + H2O = sn-glycerol 3-phosphate + choline + H(+). Inhibited by high level of NaCl or urea. In terms of biological role, glycerophosphodiester phosphodiesterase that promotes neurite formation and drives spinal motor neuron differentiation. Mediates the cleavage of glycosylphosphatidylinositol (GPI) anchor of target proteins: removes the GPI-anchor of RECK, leading to release RECK from the plasma membrane. May contribute to the osmotic regulation of cellular glycerophosphocholine. The protein is Glycerophosphodiester phosphodiesterase domain-containing protein 5 of Mus musculus (Mouse).